The chain runs to 85 residues: Progonadoliberin-2 (85 aa).

Positions 1-23 (MCASRLVLLLGLLLCVGAHLSSG) are cleaved as a signal peptide. At Gln-24 the chain carries Pyrrolidone carboxylic acid. Glycine amide is present on Gly-33.

It belongs to the GnRH family. As to expression, midbrain tegmentum.

Its subcellular location is the secreted. In terms of biological role, stimulates the secretion of gonadotropins. The sequence is that of Progonadoliberin-2 (gnrh2) from Verasper moseri (Barfin flounder).